A 312-amino-acid chain; its full sequence is Beta-ketoacyl-[acyl-carrier-protein] synthase III (312 aa).

Active-site residues include Cys112 and His237. The tract at residues 238-242 (QANIR) is ACP-binding. Asn267 is a catalytic residue.

Belongs to the thiolase-like superfamily. FabH family. As to quaternary structure, homodimer.

Its subcellular location is the cytoplasm. It carries out the reaction (2S)-2-methylbutanoyl-CoA + malonyl-[ACP] + H(+) = (4S)-4-methyl-3-oxohexanoyl-[ACP] + CO2 + CoA. The catalysed reaction is 2-methylpropanoyl-CoA + malonyl-[ACP] + H(+) = 4-methyl-3-oxopentanoyl-[ACP] + CO2 + CoA. The enzyme catalyses 3-methylbutanoyl-CoA + malonyl-[ACP] + H(+) = 5-methyl-3-oxohexanoyl-[ACP] + CO2 + CoA. It catalyses the reaction malonyl-[ACP] + acetyl-CoA + H(+) = 3-oxobutanoyl-[ACP] + CO2 + CoA. The protein operates within lipid metabolism; fatty acid biosynthesis. Catalyzes the condensation reaction of fatty acid synthesis by the addition to an acyl acceptor of two carbons from malonyl-ACP. Catalyzes the first condensation reaction which initiates fatty acid synthesis and may therefore play a role in governing the total rate of fatty acid production. Possesses both acetoacetyl-ACP synthase and acetyl transacylase activities. Can use branched-chain acyl-CoAs, with a preference for 2-methylbutanoyl-CoA, the precursor of odd-numbered anteiso fatty acids, at 30 degrees Celsius, which is further increased at a low temperature. Shows weak activity with acetyl-CoA. The protein is Beta-ketoacyl-[acyl-carrier-protein] synthase III of Listeria monocytogenes serotype 1/2a (strain 10403S).